A 1131-amino-acid chain; its full sequence is ATP-dependent helicase FUN30 (1131 aa).

Positions 1-70 (MSGSHSNDED…HTSKPLPSGS (70 aa)) are disordered. A compositionally biased stretch (polar residues) spans 16-36 (PETSSPTKVASSSPLKPTSPT). The CUE-like region stretch occupies residues 76–111 (VNLAREFPDFSQTLVQAVFKSNSFNLQSARERLTRL). The interval 114 to 141 (QRQNWTWNKNASPKKSETPPPVKKSLPL) is disordered. Phosphoserine is present on Ser-232. Disordered stretches follow at residues 242 to 273 (KYGR…YTES) and 327 to 350 (NDKD…ANES). Positions 250-271 (NDEEEEESMMTDDDDASGDDYT) are enriched in acidic residues. Ser-369 is modified (phosphoserine). A disordered region spans residues 400 to 533 (DLMNLGEDDD…GDDDDDDDDE (134 aa)). Positions 405-416 (GEDDDDDNDDGN) are enriched in acidic residues. Over residues 417 to 432 (NDNNNSNNNNTAGADA) the composition is skewed to low complexity. Basic and acidic residues predominate over residues 433-442 (TSKEKEDTKA). Position 451 is a phosphoserine (Ser-451). Acidic residues predominate over residues 480-533 (EDEDDDVDLEAIDDELPQSEHEDDDYEEEDEDYNDEEEDVEYDDGDDDDDDDDE). One can recognise a Helicase ATP-binding domain in the interval 584-752 (NLLYQNKMSC…MSLLEFIMPN (169 aa)). An ATP-binding site is contributed by 597–604 (DDMGLGKT). The DEGH box signature appears at 703-706 (DEGH). The region spanning 953–1108 (ALKKLLKTII…EDKKSQDVLE (156 aa)) is the Helicase C-terminal domain.

This sequence belongs to the SNF2/RAD54 helicase family. As to quaternary structure, homodimer.

It localises to the nucleus. The protein localises to the chromosome. It catalyses the reaction ATP + H2O = ADP + phosphate + H(+). In terms of biological role, DNA helicase that possesses intrinsic ATP-dependent nucleosome-remodeling activity and is both required for DNA repair and heterochromatin organization. Promotes DNA end resection of double-strand breaks (DSBs) following DNA damage: probably acts by weakening histone DNA interactions in nucleosomes flanking DSBs, facilitating single-stranded DNA (ssDNA) production by the EXO1 and SGS1 machinery. Promotes gene silencing at heterochromatin by regulating the chromatin structure within or around silent loci. Also required for heterochromatin organization at centromeres. The protein is ATP-dependent helicase FUN30 (FUN30) of Saccharomyces cerevisiae (strain ATCC 204508 / S288c) (Baker's yeast).